Here is a 456-residue protein sequence, read N- to C-terminus: 26S proteasome non-ATPase regulatory subunit 12 (456 aa).

Alanine 2 carries the post-translational modification N-acetylalanine. Residue lysine 92 forms a Glycyl lysine isopeptide (Lys-Gly) (interchain with G-Cter in SUMO1); alternate linkage. A Glycyl lysine isopeptide (Lys-Gly) (interchain with G-Cter in SUMO2); alternate cross-link involves residue lysine 92. Lysine 221 and lysine 368 each carry N6-acetyllysine. A PCI domain is found at 242–420 (SICKHYRAIY…GIINFQRPKD (179 aa)).

It belongs to the proteasome subunit p55 family. In terms of assembly, component of the 19S proteasome regulatory particle complex. The 26S proteasome consists of a 20S core particle (CP) and two 19S regulatory subunits (RP). The regulatory particle is made of a lid composed of 9 subunits including PSMD12, a base containing 6 ATPases and few additional components. Interacts with ERCC6.

Its function is as follows. Component of the 26S proteasome, a multiprotein complex involved in the ATP-dependent degradation of ubiquitinated proteins. This complex plays a key role in the maintenance of protein homeostasis by removing misfolded or damaged proteins, which could impair cellular functions, and by removing proteins whose functions are no longer required. Therefore, the proteasome participates in numerous cellular processes, including cell cycle progression, apoptosis, or DNA damage repair. The sequence is that of 26S proteasome non-ATPase regulatory subunit 12 (PSMD12) from Pongo abelii (Sumatran orangutan).